The chain runs to 227 residues: MAYPFQLGFQDATSPIMEELLHFHDHTLMIVFLISSLVLYIITLMLTTKLTHTSTMDAQEVETVWTILPAIILILIALPSLRILYMMDEVNNPSLTVKTMGHQWYWSYEYTDYEDLSFDSYMIPTSDLKPGELRLLEVDNRVVLPMEMTIRMLVSSEDVLHSWAVPSLGLKTDAIPGRLNQTTLMSTRPGLFYGQCSEICGSNHSFMPIVLELVPLEFFEKWSASML.

The Mitochondrial intermembrane segment spans residues 1–14 (MAYPFQLGFQDATS). Residues 15–45 (PIMEELLHFHDHTLMIVFLISSLVLYIITLM) form a helical membrane-spanning segment. The Mitochondrial matrix segment spans residues 46 to 59 (LTTKLTHTSTMDAQ). A helical transmembrane segment spans residues 60–87 (EVETVWTILPAIILILIALPSLRILYMM). Topologically, residues 88 to 227 (DEVNNPSLTV…FFEKWSASML (140 aa)) are mitochondrial intermembrane. Cu cation contacts are provided by His-161, Cys-196, Glu-198, Cys-200, His-204, and Met-207. A Mg(2+)-binding site is contributed by Glu-198.

This sequence belongs to the cytochrome c oxidase subunit 2 family. As to quaternary structure, component of the cytochrome c oxidase (complex IV, CIV), a multisubunit enzyme composed of 14 subunits. The complex is composed of a catalytic core of 3 subunits MT-CO1, MT-CO2 and MT-CO3, encoded in the mitochondrial DNA, and 11 supernumerary subunits COX4I, COX5A, COX5B, COX6A, COX6B, COX6C, COX7A, COX7B, COX7C, COX8 and NDUFA4, which are encoded in the nuclear genome. The complex exists as a monomer or a dimer and forms supercomplexes (SCs) in the inner mitochondrial membrane with NADH-ubiquinone oxidoreductase (complex I, CI) and ubiquinol-cytochrome c oxidoreductase (cytochrome b-c1 complex, complex III, CIII), resulting in different assemblies (supercomplex SCI(1)III(2)IV(1) and megacomplex MCI(2)III(2)IV(2)). Found in a complex with TMEM177, COA6, COX18, COX20, SCO1 and SCO2. Interacts with TMEM177 in a COX20-dependent manner. Interacts with COX20. Interacts with COX16. Requires Cu cation as cofactor.

The protein resides in the mitochondrion inner membrane. The catalysed reaction is 4 Fe(II)-[cytochrome c] + O2 + 8 H(+)(in) = 4 Fe(III)-[cytochrome c] + 2 H2O + 4 H(+)(out). Its function is as follows. Component of the cytochrome c oxidase, the last enzyme in the mitochondrial electron transport chain which drives oxidative phosphorylation. The respiratory chain contains 3 multisubunit complexes succinate dehydrogenase (complex II, CII), ubiquinol-cytochrome c oxidoreductase (cytochrome b-c1 complex, complex III, CIII) and cytochrome c oxidase (complex IV, CIV), that cooperate to transfer electrons derived from NADH and succinate to molecular oxygen, creating an electrochemical gradient over the inner membrane that drives transmembrane transport and the ATP synthase. Cytochrome c oxidase is the component of the respiratory chain that catalyzes the reduction of oxygen to water. Electrons originating from reduced cytochrome c in the intermembrane space (IMS) are transferred via the dinuclear copper A center (CU(A)) of subunit 2 and heme A of subunit 1 to the active site in subunit 1, a binuclear center (BNC) formed by heme A3 and copper B (CU(B)). The BNC reduces molecular oxygen to 2 water molecules using 4 electrons from cytochrome c in the IMS and 4 protons from the mitochondrial matrix. In Balaenoptera musculus (Blue whale), this protein is Cytochrome c oxidase subunit 2 (MT-CO2).